We begin with the raw amino-acid sequence, 465 residues long: Trigger factor (465 aa).

In terms of domain architecture, PPIase FKBP-type spans 163–248; sequence GDVINFNFKG…INKIKENQPA (86 aa). The segment at 431–465 is disordered; that stretch reads EIVNKNQNDNEIEQDKEQKDNNEEKIKQENNLENK. Over residues 443–465 the composition is skewed to basic and acidic residues; it reads EQDKEQKDNNEEKIKQENNLENK.

It belongs to the FKBP-type PPIase family. Tig subfamily.

It localises to the cytoplasm. It carries out the reaction [protein]-peptidylproline (omega=180) = [protein]-peptidylproline (omega=0). In terms of biological role, involved in protein export. Acts as a chaperone by maintaining the newly synthesized protein in an open conformation. Functions as a peptidyl-prolyl cis-trans isomerase. The sequence is that of Trigger factor from Mesomycoplasma hyopneumoniae (strain 232) (Mycoplasma hyopneumoniae).